A 355-amino-acid chain; its full sequence is uncharacterized protein (355 aa).

58–65 serves as a coordination point for ATP; it reads GYIIFGIK.

This is an uncharacterized protein from Ureaplasma parvum serovar 3 (strain ATCC 700970).